The chain runs to 440 residues: Ribulose bisphosphate carboxylase large chain (440 aa).

Lysine 3 carries the post-translational modification N6,N6,N6-trimethyllysine. Substrate contacts are provided by asparagine 112 and threonine 162. Residue lysine 164 is the Proton acceptor of the active site. Lysine 166 contacts substrate. Residues lysine 190, aspartate 192, and glutamate 193 each contribute to the Mg(2+) site. The residue at position 190 (lysine 190) is an N6-carboxylysine. The Proton acceptor role is filled by histidine 283. Substrate is bound by residues arginine 284, histidine 316, and serine 368.

This sequence belongs to the RuBisCO large chain family. Type I subfamily. Heterohexadecamer of 8 large chains and 8 small chains; disulfide-linked. The disulfide link is formed within the large subunit homodimers. It depends on Mg(2+) as a cofactor. In terms of processing, the disulfide bond which can form in the large chain dimeric partners within the hexadecamer appears to be associated with oxidative stress and protein turnover.

The protein resides in the plastid. The protein localises to the chloroplast. It catalyses the reaction 2 (2R)-3-phosphoglycerate + 2 H(+) = D-ribulose 1,5-bisphosphate + CO2 + H2O. It carries out the reaction D-ribulose 1,5-bisphosphate + O2 = 2-phosphoglycolate + (2R)-3-phosphoglycerate + 2 H(+). In terms of biological role, ruBisCO catalyzes two reactions: the carboxylation of D-ribulose 1,5-bisphosphate, the primary event in carbon dioxide fixation, as well as the oxidative fragmentation of the pentose substrate in the photorespiration process. Both reactions occur simultaneously and in competition at the same active site. The chain is Ribulose bisphosphate carboxylase large chain from Bambusa multiplex (Hedge bamboo).